The following is a 224-amino-acid chain: Probable 2-phosphosulfolactate phosphatase (224 aa).

It belongs to the ComB family. Mg(2+) serves as cofactor.

It carries out the reaction (2R)-O-phospho-3-sulfolactate + H2O = (2R)-3-sulfolactate + phosphate. In Pseudothermotoga lettingae (strain ATCC BAA-301 / DSM 14385 / NBRC 107922 / TMO) (Thermotoga lettingae), this protein is Probable 2-phosphosulfolactate phosphatase.